The sequence spans 215 residues: Thiamine-phosphate synthase (215 aa).

4-amino-2-methyl-5-(diphosphooxymethyl)pyrimidine is bound by residues 43–47 (QFRDK) and Asn-78. Asp-79 and Asp-98 together coordinate Mg(2+). Residue Ser-117 participates in 4-amino-2-methyl-5-(diphosphooxymethyl)pyrimidine binding. 2-[(2R,5Z)-2-carboxy-4-methylthiazol-5(2H)-ylidene]ethyl phosphate is bound at residue 143–145 (TNS). Lys-146 contacts 4-amino-2-methyl-5-(diphosphooxymethyl)pyrimidine. Residues Gly-174 and 194-195 (IS) each bind 2-[(2R,5Z)-2-carboxy-4-methylthiazol-5(2H)-ylidene]ethyl phosphate.

This sequence belongs to the thiamine-phosphate synthase family. The cofactor is Mg(2+).

It carries out the reaction 2-[(2R,5Z)-2-carboxy-4-methylthiazol-5(2H)-ylidene]ethyl phosphate + 4-amino-2-methyl-5-(diphosphooxymethyl)pyrimidine + 2 H(+) = thiamine phosphate + CO2 + diphosphate. It catalyses the reaction 2-(2-carboxy-4-methylthiazol-5-yl)ethyl phosphate + 4-amino-2-methyl-5-(diphosphooxymethyl)pyrimidine + 2 H(+) = thiamine phosphate + CO2 + diphosphate. The enzyme catalyses 4-methyl-5-(2-phosphooxyethyl)-thiazole + 4-amino-2-methyl-5-(diphosphooxymethyl)pyrimidine + H(+) = thiamine phosphate + diphosphate. It functions in the pathway cofactor biosynthesis; thiamine diphosphate biosynthesis; thiamine phosphate from 4-amino-2-methyl-5-diphosphomethylpyrimidine and 4-methyl-5-(2-phosphoethyl)-thiazole: step 1/1. Condenses 4-methyl-5-(beta-hydroxyethyl)thiazole monophosphate (THZ-P) and 2-methyl-4-amino-5-hydroxymethyl pyrimidine pyrophosphate (HMP-PP) to form thiamine monophosphate (TMP). This is Thiamine-phosphate synthase from Lactococcus lactis subsp. lactis (strain IL1403) (Streptococcus lactis).